Here is a 579-residue protein sequence, read N- to C-terminus: Arginine--tRNA ligase (579 aa).

A 'HIGH' region motif is present at residues 127–137; the sequence is PNLAKEMHVGH.

It belongs to the class-I aminoacyl-tRNA synthetase family. As to quaternary structure, monomer.

It is found in the cytoplasm. The enzyme catalyses tRNA(Arg) + L-arginine + ATP = L-arginyl-tRNA(Arg) + AMP + diphosphate. In Ectopseudomonas mendocina (strain ymp) (Pseudomonas mendocina), this protein is Arginine--tRNA ligase.